The sequence spans 110 residues: DNA-directed RNA polymerase subunit omega (110 aa).

It belongs to the RNA polymerase subunit omega family. The RNAP catalytic core consists of 2 alpha, 1 beta, 1 beta' and 1 omega subunit. When a sigma factor is associated with the core the holoenzyme is formed, which can initiate transcription.

The enzyme catalyses RNA(n) + a ribonucleoside 5'-triphosphate = RNA(n+1) + diphosphate. Its function is as follows. Promotes RNA polymerase assembly. Latches the N- and C-terminal regions of the beta' subunit thereby facilitating its interaction with the beta and alpha subunits. This chain is DNA-directed RNA polymerase subunit omega, found in Vesicomyosocius okutanii subsp. Calyptogena okutanii (strain HA).